Consider the following 185-residue polypeptide: Elongation factor P (185 aa).

This sequence belongs to the elongation factor P family.

The protein resides in the cytoplasm. Its pathway is protein biosynthesis; polypeptide chain elongation. Its function is as follows. Involved in peptide bond synthesis. Stimulates efficient translation and peptide-bond synthesis on native or reconstituted 70S ribosomes in vitro. Probably functions indirectly by altering the affinity of the ribosome for aminoacyl-tRNA, thus increasing their reactivity as acceptors for peptidyl transferase. This Staphylococcus epidermidis (strain ATCC 35984 / DSM 28319 / BCRC 17069 / CCUG 31568 / BM 3577 / RP62A) protein is Elongation factor P.